The sequence spans 122 residues: Large ribosomal subunit protein bL12 (122 aa).

This sequence belongs to the bacterial ribosomal protein bL12 family. As to quaternary structure, homodimer. Part of the ribosomal stalk of the 50S ribosomal subunit. Forms a multimeric L10(L12)X complex, where L10 forms an elongated spine to which 2 to 4 L12 dimers bind in a sequential fashion. Binds GTP-bound translation factors.

Forms part of the ribosomal stalk which helps the ribosome interact with GTP-bound translation factors. Is thus essential for accurate translation. This chain is Large ribosomal subunit protein bL12, found in Mycoplasma mycoides subsp. mycoides SC (strain CCUG 32753 / NCTC 10114 / PG1).